A 75-amino-acid chain; its full sequence is MSRFCQVTGKRSVSGNNRSYAMNATKRRFLPNLHFHRFWIEAEKRFIKIRVSAKGMRVIDKKGIENCLANLCIRY.

This sequence belongs to the bacterial ribosomal protein bL28 family.

The polypeptide is Large ribosomal subunit protein bL28 (Baumannia cicadellinicola subsp. Homalodisca coagulata).